Consider the following 634-residue polypeptide: SPARC-like protein 1 (634 aa).

The first 16 residues, 1–16 (MKAVLLLLYALGIAAA), serve as a signal peptide directing secretion. A disordered region spans residues 50 to 335 (ADIEKHPNHK…DDSKHGASDD (286 aa)). Basic and acidic residues predominate over residues 51–62 (DIEKHPNHKAEK). 3 positions are modified to phosphoserine: Ser-68, Ser-76, and Ser-84. Over residues 73-83 (HEQSTEQDKTY) the composition is skewed to basic and acidic residues. Acidic residues predominate over residues 89–99 (LKDEEDGDGDL). Residues 131–144 (TVSTPFVDSDQPAN) show a composition bias toward polar residues. An N-linked (GlcNAc...) asparagine glycan is attached at Asn-144. Phosphoserine occurs at positions 151 and 159. 2 stretches are compositionally biased toward acidic residues: residues 189–198 (EKEEEEDPED) and 205–214 (NQEEEKEPPE). Polar residues predominate over residues 233–258 (QESSQPTQISKTKNDFEQGSQGQEGD). Ser-259 carries the post-translational modification Phosphoserine. Basic and acidic residues-rich tracts occupy residues 263-276 (GEDK…HLPH) and 292-303 (GNRKDTDEEKAV). 2 positions are modified to phosphoserine: Ser-333 and Ser-340. A disordered region spans residues 360-398 (EETPDESENRSEAGDNQGAKKAESSPNAEPSDEGNSRGH). The segment covering 366 to 382 (SENRSEAGDNQGAKKAE) has biased composition (basic and acidic residues). A glycan (N-linked (GlcNAc...) asparagine) is linked at Asn-368. 2 positions are modified to phosphoserine: Ser-370 and Ser-390. One can recognise a Follistatin-like domain in the interval 402–424 (SCMNFQCKRGHTCKTDQHGKPHC). Disulfide bonds link Cys-403–Cys-414, Cys-408–Cys-424, Cys-426–Cys-460, Cys-432–Cys-453, Cys-442–Cys-479, Cys-485–Cys-596, and Cys-604–Cys-620. The Kazal-like domain occupies 420-481 (GKPHCVCQDP…QLDYFGACKS (62 aa)). Asn-446 carries N-linked (GlcNAc...) asparagine glycosylation. Residues 592–627 (PMEHCITRFFEECDPNKDKHITLKEWGHCFGIKEED) form the EF-hand domain. Residues Asp-605, Asn-607, Asp-609, His-611, and Glu-616 each contribute to the Ca(2+) site.

The protein belongs to the SPARC family. Expressed in many types of neurons in the brain.

It localises to the secreted. The protein resides in the extracellular space. The protein localises to the extracellular matrix. The protein is SPARC-like protein 1 (Sparcl1) of Rattus norvegicus (Rat).